A 293-amino-acid chain; its full sequence is Protein boule-like (293 aa).

A compositionally biased stretch (polar residues) spans 1-16; it reads METESRAQSTNQTQTD. The tract at residues 1–39 is disordered; that stretch reads METESRAQSTNQTQTDSLSPSPNPVSPVPLNNPTSGPRY. 3 positions are modified to phosphoserine: S19, S21, and S26. The 78-residue stretch at 45-122 folds into the RRM domain; the sequence is NRIFVGGIDF…KKLNIGPAIR (78 aa). The DAZ domain maps to 172 to 196; the sequence is PSRSISSSPVMVAQPVYQQPAYHYQ.

This sequence belongs to the RRM DAZ family. In terms of assembly, interacts with DAZ1 and DAZL. Testis specific. Not expressed in early embryos, primoridal germ cells and spermatogonial cells. First expressed in the cytoplasm of spermatocytes and then persists through meiosis.

It localises to the cytoplasm. In terms of biological role, probable RNA-binding protein, which may be required during spermatogenesis. May act by binding to the 3'-UTR of mRNAs and regulating their translation. This chain is Protein boule-like, found in Mus musculus (Mouse).